We begin with the raw amino-acid sequence, 196 residues long: Peptidyl-tRNA hydrolase (196 aa).

A tRNA-binding site is contributed by tyrosine 16. Catalysis depends on histidine 21, which acts as the Proton acceptor. Residues phenylalanine 67, asparagine 69, and asparagine 115 each contribute to the tRNA site.

This sequence belongs to the PTH family. In terms of assembly, monomer.

It is found in the cytoplasm. It catalyses the reaction an N-acyl-L-alpha-aminoacyl-tRNA + H2O = an N-acyl-L-amino acid + a tRNA + H(+). Functionally, hydrolyzes ribosome-free peptidyl-tRNAs (with 1 or more amino acids incorporated), which drop off the ribosome during protein synthesis, or as a result of ribosome stalling. Catalyzes the release of premature peptidyl moieties from peptidyl-tRNA molecules trapped in stalled 50S ribosomal subunits, and thus maintains levels of free tRNAs and 50S ribosomes. In Edwardsiella ictaluri (strain 93-146), this protein is Peptidyl-tRNA hydrolase.